The chain runs to 780 residues: Striatin (780 aa).

The stretch at Leu-53–Lys-120 forms a coiled coil. A caveolin-binding region spans residues Phe-55 to Phe-63. Residues Thr-123 to Asn-150 form a disordered region. The residue at position 137 (Ser-137) is a Phosphoserine. The calmodulin-binding stretch occupies residues Gln-149 to Leu-166. Thr-225 bears the Phosphothreonine mark. A phosphoserine mark is found at Ser-227, Ser-229, Ser-245, and Ser-259. Disordered regions lie at residues Asp-289–Lys-312, Glu-334–Lys-353, and Val-364–Arg-392. A compositionally biased stretch (basic and acidic residues) spans Asn-299–Lys-312. Residues Lys-338–Arg-351 are compositionally biased toward basic residues. 6 WD repeats span residues Ser-461 to Lys-500, Ala-514 to Tyr-553, Gly-567 to Ser-606, Ser-662 to Ser-701, Ala-704 to Glu-743, and Lys-750 to Val-780.

Belongs to the WD repeat striatin family. In terms of assembly, part of the core of STRIPAK complexes composed of PP2A catalytic and scaffolding subunits, the striatins (PP2A regulatory subunits), the striatin-associated proteins MOB4, STRIP1 and STRIP2, PDCD10 and members of the STE20 kinases, such as STK24 and STK26. Interacts with CTTNBP2; this interaction may regulate dendritic spine distribution of STRN. Activation of glutamate receptors weakens the interaction with CTTNBP2. As to expression, mainly expressed in brain but is also expressed at low levels in various tissues such as kidney, spleen, skeletal muscle and lung.

It localises to the cytoplasm. Its subcellular location is the membrane. The protein resides in the cell projection. The protein localises to the dendritic spine. Functionally, calmodulin-binding scaffolding protein which is the center of the striatin-interacting phosphatase and kinase (STRIPAK) complexes. STRIPAK complexes have critical roles in protein (de)phosphorylation and are regulators of multiple signaling pathways including Hippo, MAPK, nuclear receptor and cytoskeleton remodeling. Different types of STRIPAK complexes are involved in a variety of biological processes such as cell growth, differentiation, apoptosis, metabolism and immune regulation. The polypeptide is Striatin (Strn) (Mus musculus (Mouse)).